The chain runs to 244 residues: Uridylate kinase (244 aa).

Residue 17–20 (KVSG) participates in ATP binding. The segment at 25-30 (GDKGFG) is involved in allosteric activation by GTP. Glycine 59 lines the UMP pocket. Residues glycine 60 and arginine 64 each contribute to the ATP site. UMP-binding positions include aspartate 80 and 141 to 148 (VGNPFFTT). ATP is bound by residues threonine 168, glutamine 169, tyrosine 174, and aspartate 177.

The protein belongs to the UMP kinase family. In terms of assembly, homohexamer.

It localises to the cytoplasm. It catalyses the reaction UMP + ATP = UDP + ADP. It participates in pyrimidine metabolism; CTP biosynthesis via de novo pathway; UDP from UMP (UMPK route): step 1/1. Allosterically activated by GTP. Inhibited by UTP. In terms of biological role, catalyzes the reversible phosphorylation of UMP to UDP. This is Uridylate kinase from Ehrlichia ruminantium (strain Welgevonden).